We begin with the raw amino-acid sequence, 299 residues long: Transcription elongation factor A protein 2 (299 aa).

In terms of domain architecture, TFIIS N-terminal spans 6 to 83 (EEIARIARRL…KSWKKLLDAS (78 aa)). Lysine 58 participates in a covalent cross-link: Glycyl lysine isopeptide (Lys-Gly) (interchain with G-Cter in ubiquitin). Phosphoserine is present on residues serine 60 and serine 100. The disordered stretch occupies residues 86-128 (KARERGRGMPLPTSSRDASEAPDPSRKRPELPRAPSTPRITTF). Positions 102 to 116 (DASEAPDPSRKRPEL) are enriched in basic and acidic residues. Residues 138-254 (VRNKCREMLT…EHQMARTGGT (117 aa)) form the TFIIS central domain. The segment at 257-297 (DLFTCGKCRKKNCTYTQVQTRSSDEPMTTFVVCNECGNRWK) adopts a TFIIS-type zinc-finger fold. Cysteine 261, cysteine 264, cysteine 289, and cysteine 292 together coordinate Zn(2+).

This sequence belongs to the TFS-II family. Interacts with the basal transcription factor GTF2B. Interacts with REXO1. Testis and ovary specific.

It localises to the nucleus. Its function is as follows. Necessary for efficient RNA polymerase II transcription elongation past template-encoded arresting sites. The arresting sites in DNA have the property of trapping a certain fraction of elongating RNA polymerases that pass through, resulting in locked ternary complexes. Cleavage of the nascent transcript by S-II allows the resumption of elongation from the new 3'-terminus. This is Transcription elongation factor A protein 2 (TCEA2) from Homo sapiens (Human).